Reading from the N-terminus, the 227-residue chain is Adenosylcobinamide-GDP ribazoletransferase (227 aa).

Helical transmembrane passes span 3–23, 26–46, 95–115, 117–137, and 165–185; these read CLKAVVAFFTALPVGGAELDF, IWATPYLAGLMVGGAGGAVYF, GVGGIFAVVALFVLAASARPE, WLDYIVTDLYSKALALVVAAY, and AVAAWLHPAAFLAATVLSLFF.

It belongs to the CobS family. Requires Mg(2+) as cofactor.

The protein resides in the cell membrane. The enzyme catalyses alpha-ribazole + adenosylcob(III)inamide-GDP = adenosylcob(III)alamin + GMP + H(+). It carries out the reaction alpha-ribazole 5'-phosphate + adenosylcob(III)inamide-GDP = adenosylcob(III)alamin 5'-phosphate + GMP + H(+). It participates in cofactor biosynthesis; adenosylcobalamin biosynthesis; adenosylcobalamin from cob(II)yrinate a,c-diamide: step 7/7. In terms of biological role, joins adenosylcobinamide-GDP and alpha-ribazole to generate adenosylcobalamin (Ado-cobalamin). Also synthesizes adenosylcobalamin 5'-phosphate from adenosylcobinamide-GDP and alpha-ribazole 5'-phosphate. This Pyrobaculum islandicum (strain DSM 4184 / JCM 9189 / GEO3) protein is Adenosylcobinamide-GDP ribazoletransferase.